The chain runs to 613 residues: MTSLLFAFSLFLSFSVGSIFPFSTSNGPAVNDTLQNAIRSQRDVSKPIPIDRVGFSGVSLSSFFESEGYSSDSLSNLNGLLKENVDGVMIDLYWNEFTSKWQLCPAPFPNNITYTTASNRIVDVSWNNKTYKCDPNLSTDNIMSILNSFIRDTNTDVEANFMHVMYNLKSIHYEKSNQTISLENIYKEKNSNLNVVGMDTLNDTVSLLSSYIFTPTLLKQYQSTSNKYTNSSSSIRYIDSLNETQAIQDFYSQSTILMPSLQTVLLTQYKRLMVHVVTNDMAESSRSYQISSSDKDTIFFNSDLPASIFHTDNASADELCYELSDAYNRTDVNIAEFNKVSLNATLRLVVDDDKTPFTTKSLSKYVRCGYCPIFNSTEYSSQKVTEGNSSIISREFASNLFWSWAPGQPSGPDNCINCTRPTTNNTSKHSDDNGEEEEGNNIAYKCVALTEEGWEVSNCYEKYLFACQNKLSRNEWKLNNSTKRNYFDIDDDDCPEGYFFSLPRSNIEMLSLMTTVKQENVNYPIWIDLNDITVENCFVSGGPYAQCPYQETVTTDKFVRMIAPSFVVAMVVLVLIFIEKVFRKTPIQTNRKRYWKKAIQEYYAKNDYEGVPS.

The first 17 residues, 1-17 (MTSLLFAFSLFLSFSVG), serve as a signal peptide directing secretion. At 18-557 (SIFPFSTSNG…PYQETVTTDK (540 aa)) the chain is on the extracellular side. 18 N-linked (GlcNAc...) asparagine glycosylation sites follow: Asn-31, Asn-111, Asn-128, Asn-136, Asn-177, Asn-202, Asn-230, Asn-242, Asn-313, Asn-328, Asn-343, Asn-375, Asn-388, Asn-417, Asn-424, Asn-425, Asn-479, and Asn-480. The chain crosses the membrane as a helical span at residues 558–578 (FVRMIAPSFVVAMVVLVLIFI). At 579–613 (EKVFRKTPIQTNRKRYWKKAIQEYYAKNDYEGVPS) the chain is on the cytoplasmic side.

It belongs to the MTC6 family.

The protein resides in the membrane. In terms of biological role, may be involved in telomere capping. In Candida albicans (strain WO-1) (Yeast), this protein is Maintenance of telomere capping protein 6 (MTC6).